A 503-amino-acid chain; its full sequence is UDP-N-acetylmuramate--L-alanine ligase (503 aa).

120–126 (GTHGKTS) is an ATP binding site.

Belongs to the MurCDEF family.

It localises to the cytoplasm. It carries out the reaction UDP-N-acetyl-alpha-D-muramate + L-alanine + ATP = UDP-N-acetyl-alpha-D-muramoyl-L-alanine + ADP + phosphate + H(+). It participates in cell wall biogenesis; peptidoglycan biosynthesis. Functionally, cell wall formation. The chain is UDP-N-acetylmuramate--L-alanine ligase from Rhodococcus opacus (strain B4).